A 484-amino-acid chain; its full sequence is MTATATEHVAATSGATGRIARVIGPVVDVEFPADAIPSIYNALTTEITLNGETKTITFETSQHLGDNLVRAISLQATDGLVRGTSVVDSGAPISVPVGDGVKGHIFNVLGQPLDVTESELDISERWPIHRKAPAFASLEGSTEMLETGIKVIDLLTPYIKGGKIGLFGGAGVGKTVLIQEMITRVARNFGGTSVFAGVGERTREGNDLWVEMEEAGVLKDTALVFGQMDEPPGTRLRVALSALTMAEYFRDVQNQDVLLFIDNIFRFTQAGSEVSTLLGRMPSAVGYQPNLADEMGLLQERITSTKGHSITSMQAIYVPADDYTDPAPATTFAHLDATTELSREIASRGLYPAVDPLTSTSRILDPQYIGKDHYNTAVRVKQILQKNKELQDIIAILGVDELSEEDKIVVSRARRIQQFLSQNTYTAKQFTGVEGSTVSIKDTVEGFTAICDGELDHIAEQAFFNVGGLDDVERQWAKIQEQTK.

Position 168–175 (168–175 (GGAGVGKT)) interacts with ATP.

It belongs to the ATPase alpha/beta chains family. In terms of assembly, F-type ATPases have 2 components, CF(1) - the catalytic core - and CF(0) - the membrane proton channel. CF(1) has five subunits: alpha(3), beta(3), gamma(1), delta(1), epsilon(1). CF(0) has three main subunits: a(1), b(2) and c(9-12). The alpha and beta chains form an alternating ring which encloses part of the gamma chain. CF(1) is attached to CF(0) by a central stalk formed by the gamma and epsilon chains, while a peripheral stalk is formed by the delta and b chains.

The protein localises to the cell membrane. The catalysed reaction is ATP + H2O + 4 H(+)(in) = ADP + phosphate + 5 H(+)(out). Functionally, produces ATP from ADP in the presence of a proton gradient across the membrane. The catalytic sites are hosted primarily by the beta subunits. In Pseudarthrobacter chlorophenolicus (strain ATCC 700700 / DSM 12829 / CIP 107037 / JCM 12360 / KCTC 9906 / NCIMB 13794 / A6) (Arthrobacter chlorophenolicus), this protein is ATP synthase subunit beta.